The primary structure comprises 167 residues: Leukotoxin-activating lysine-acyltransferase LktC serotype A1 (167 aa).

Active-site residues include H22 and D91.

This sequence belongs to the RTX toxin acyltransferase family.

The protein resides in the cytoplasm. It catalyses the reaction a fatty acyl-[ACP] + L-lysyl-[protein] = N(6)-(fatty acyl)-L-lysyl-[protein] + holo-[ACP] + H(+). Functionally, involved in fatty acylation of the protoxin (LktA) at two internal lysine residues, thereby converting it to the active toxin. This is Leukotoxin-activating lysine-acyltransferase LktC serotype A1 (lktC) from Mannheimia haemolytica (Pasteurella haemolytica).